A 69-amino-acid polypeptide reads, in one-letter code: Conotoxin AbVIF (69 aa).

Positions 1–17 (VLIIAVLFLTACQLTTA) are cleaved as a signal peptide. Positions 18-40 (ETSSRGKQKHRALRSTDKNSRMS) are excised as a propeptide. The interval 20 to 41 (SSRGKQKHRALRSTDKNSRMSK) is disordered. Intrachain disulfides connect C43-C57, C50-C61, and C56-C68.

It belongs to the conotoxin O1 superfamily. In terms of tissue distribution, expressed by the venom duct.

The protein resides in the secreted. This chain is Conotoxin AbVIF, found in Conus abbreviatus (Abbreviated cone).